A 101-amino-acid polypeptide reads, in one-letter code: Small ribosomal subunit protein uS14 (101 aa).

It belongs to the universal ribosomal protein uS14 family. As to quaternary structure, part of the 30S ribosomal subunit. Contacts proteins S3 and S10.

In terms of biological role, binds 16S rRNA, required for the assembly of 30S particles and may also be responsible for determining the conformation of the 16S rRNA at the A site. This Neorickettsia sennetsu (strain ATCC VR-367 / Miyayama) (Ehrlichia sennetsu) protein is Small ribosomal subunit protein uS14.